The following is a 147-amino-acid chain: uncharacterized protein (147 aa).

One can recognise an HTH marR-type domain in the interval 1 to 137; that stretch reads MRDNTIGSLI…LYELMTKVHK (137 aa). The segment at residues 53 to 76 is a DNA-binding region (H-T-H motif); sequence QMELAEKVTVTQGGISRMLTRLEK.

This is an uncharacterized protein from Bacillus cereus (strain ATCC 14579 / DSM 31 / CCUG 7414 / JCM 2152 / NBRC 15305 / NCIMB 9373 / NCTC 2599 / NRRL B-3711).